Reading from the N-terminus, the 407-residue chain is Protein NIS1 (407 aa).

Low complexity predominate over residues 40-61 (TSNSNSNSNSNSNTNSNTNSNS). Disordered regions lie at residues 40–64 (TSNS…SDTK) and 251–315 (RSIR…KLNT). A phosphoserine mark is found at Ser260 and Ser264. The span at 266–276 (PTTTPATATKT) shows a compositional bias: low complexity. The segment covering 277 to 302 (IKQNSTTPTTRSVYNKNVGRSNTSPS) has biased composition (polar residues). Phosphoserine is present on residues Ser300 and Ser302. Basic residues predominate over residues 306-315 (HPKRRGKLNT). The SUMO-binding motif lies at 391-398 (IIIPDSQD).

In terms of assembly, interacts with CBF2, GIS1, NAP1, PRM8, REI1, SHS1 and SMT3.

Its subcellular location is the bud neck. The protein resides in the cytoplasm. The protein localises to the cell cortex. In terms of biological role, may be involved in a mitotic signaling network. Binds sumoylated proteins and may stabilize SUMO chains. The chain is Protein NIS1 (NIS1) from Saccharomyces cerevisiae (strain YJM789) (Baker's yeast).